We begin with the raw amino-acid sequence, 261 residues long: tRNA pseudouridine synthase A (261 aa).

The active-site Nucleophile is the Asp-51. Substrate is bound at residue Tyr-109.

Belongs to the tRNA pseudouridine synthase TruA family. As to quaternary structure, homodimer.

The enzyme catalyses uridine(38/39/40) in tRNA = pseudouridine(38/39/40) in tRNA. Functionally, formation of pseudouridine at positions 38, 39 and 40 in the anticodon stem and loop of transfer RNAs. This chain is tRNA pseudouridine synthase A, found in Shewanella sp. (strain ANA-3).